We begin with the raw amino-acid sequence, 238 residues long: MAAKYLSAANAAALDKDLMSMGAFSLDQLMELAGLSVSQVVYKVHPPSKGRRILVACGPGNNGGDGLVAARHLWHYGYKPTIYYPKPGKNELYQRLSTQLRNLSIPFTDDFPSAIKDSDHIVDAIFGFSFTGSIRSPFDTIISTLEATSLPITSIDAPSSWDITNGPPSSGPGANLMPQYLISLTAPKPLVRYFKGRHFLGGRFVTPEIHQKYNLQLPEYEGVDQIVEVPIEESEEKL.

One can recognise a YjeF N-terminal domain in the interval 11 to 217 (AAALDKDLMS…EIHQKYNLQL (207 aa)). 61–65 (NNGGD) is a (6S)-NADPHX binding site. K(+) contacts are provided by Asn62 and Asp123. (6S)-NADPHX is bound by residues 127-133 (GFSFTGS) and Asp156. Residue Ser159 participates in K(+) binding.

Belongs to the NnrE/AIBP family. It depends on K(+) as a cofactor.

The protein localises to the cytoplasm. The protein resides in the mitochondrion. The enzyme catalyses (6R)-NADHX = (6S)-NADHX. It catalyses the reaction (6R)-NADPHX = (6S)-NADPHX. Functionally, catalyzes the epimerization of the S- and R-forms of NAD(P)HX, a damaged form of NAD(P)H that is a result of enzymatic or heat-dependent hydration. This is a prerequisite for the S-specific NAD(P)H-hydrate dehydratase to allow the repair of both epimers of NAD(P)HX. In Sclerotinia sclerotiorum (strain ATCC 18683 / 1980 / Ss-1) (White mold), this protein is NAD(P)H-hydrate epimerase.